The following is a 228-amino-acid chain: Ribosomal RNA small subunit methyltransferase G (228 aa).

S-adenosyl-L-methionine is bound by residues Gly70, 121-122 (AE), and Arg138.

This sequence belongs to the methyltransferase superfamily. RNA methyltransferase RsmG family.

It is found in the cytoplasm. In terms of biological role, specifically methylates the N7 position of a guanine in 16S rRNA. This chain is Ribosomal RNA small subunit methyltransferase G, found in Thermotoga petrophila (strain ATCC BAA-488 / DSM 13995 / JCM 10881 / RKU-1).